A 365-amino-acid polypeptide reads, in one-letter code: Flagellin 1 (365 aa).

Belongs to the bacterial flagellin family.

The protein localises to the secreted. It localises to the bacterial flagellum. Its function is as follows. Flagellin is the subunit protein which polymerizes to form the filaments of bacterial flagella. The protein is Flagellin 1 (fliC1) of Proteus mirabilis.